The following is a 225-amino-acid chain: UPF0758 protein Sputw3181_0338 (225 aa).

The MPN domain maps to 102–224; it reads VLTNPDLTRD…IVSFAERGWI (123 aa). Residues histidine 173, histidine 175, and aspartate 186 each coordinate Zn(2+). The JAMM motif signature appears at 173–186; sequence HNHPSGIAEPSQAD.

It belongs to the UPF0758 family.

In Shewanella sp. (strain W3-18-1), this protein is UPF0758 protein Sputw3181_0338.